The sequence spans 252 residues: UPF0246 protein AM1_4276 (252 aa).

The protein belongs to the UPF0246 family.

The chain is UPF0246 protein AM1_4276 from Acaryochloris marina (strain MBIC 11017).